The chain runs to 595 residues: NADH-quinone oxidoreductase subunit C/D (595 aa).

The segment at 1-185 (MNKNICLSAS…NPFVLTKEKE (185 aa)) is NADH dehydrogenase I subunit C. The NADH dehydrogenase I subunit D stretch occupies residues 209–595 (DFMFLNFGPN…IDFVMSDVDR (387 aa)).

This sequence in the N-terminal section; belongs to the complex I 30 kDa subunit family. It in the C-terminal section; belongs to the complex I 49 kDa subunit family. NDH-1 is composed of 13 different subunits. Subunits NuoB, CD, E, F, and G constitute the peripheral sector of the complex.

Its subcellular location is the cell inner membrane. It carries out the reaction a quinone + NADH + 5 H(+)(in) = a quinol + NAD(+) + 4 H(+)(out). NDH-1 shuttles electrons from NADH, via FMN and iron-sulfur (Fe-S) centers, to quinones in the respiratory chain. The immediate electron acceptor for the enzyme in this species is believed to be ubiquinone. Couples the redox reaction to proton translocation (for every two electrons transferred, four hydrogen ions are translocated across the cytoplasmic membrane), and thus conserves the redox energy in a proton gradient. In Baumannia cicadellinicola subsp. Homalodisca coagulata, this protein is NADH-quinone oxidoreductase subunit C/D.